We begin with the raw amino-acid sequence, 56 residues long: Photosystem II reaction center protein K (56 aa).

A propeptide spanning residues 1–19 (MLNFLLQNTFVLWSNFILC) is cleaved from the precursor. A helical membrane pass occupies residues 35-55 (MPVIPVFFFLLAFVWQAAVSF).

This sequence belongs to the PsbK family. PSII is composed of 1 copy each of membrane proteins PsbA, PsbB, PsbC, PsbD, PsbE, PsbF, PsbH, PsbI, PsbJ, PsbK, PsbL, PsbM, PsbT, PsbX, PsbY, PsbZ, Psb30/Ycf12, at least 3 peripheral proteins of the oxygen-evolving complex and a large number of cofactors. It forms dimeric complexes.

It is found in the plastid. The protein localises to the chloroplast thylakoid membrane. In terms of biological role, one of the components of the core complex of photosystem II (PSII). PSII is a light-driven water:plastoquinone oxidoreductase that uses light energy to abstract electrons from H(2)O, generating O(2) and a proton gradient subsequently used for ATP formation. It consists of a core antenna complex that captures photons, and an electron transfer chain that converts photonic excitation into a charge separation. The chain is Photosystem II reaction center protein K from Welwitschia mirabilis (Tree tumbo).